The sequence spans 468 residues: Peripherin (468 aa).

Over residues M1–S16 the composition is skewed to low complexity. Positions M1–G22 are disordered. A head region spans residues M1–Q96. Y17 is subject to 3'-nitrotyrosine. Phosphoserine is present on residues S28, S50, and S59. The IF rod domain maps to E94–I404. The interval E97–A129 is coil 1A. The segment at R130–L140 is linker 1. The coil 1B stretch occupies residues C141–L236. Positions Q237–T259 are linker 2. The coil 2 stretch occupies residues A260–S402. 3'-nitrotyrosine is present on Y376. The tail stretch occupies residues R403–Y468. Residues G445–Y468 are disordered. Y468 carries the post-translational modification Phosphotyrosine.

The protein belongs to the intermediate filament family. Forms homodimers (in vitro). Homopolymerizes into a filamentous network (in vitro). Forms heterodimers with NEFL, NEFM or NEFH (in vitro). Interacts with DST (via C-terminus). Interacts with RAB7A; the interaction is direct. Interacts with PRKCE (via phorbol-ester/DAG-type 2 domain). Phosphorylated; phosphorylation increases after nerve injury in regenerating neurons. Expressed in hypoglossal motor neurons (at protein level). Expressed in the small and large sensory neurons of the dorsal root ganglion (at protein level). Expressed in cutaneous and muscular sensory neurons.

The protein localises to the cytoplasm. The protein resides in the cytoskeleton. It localises to the cell projection. Its subcellular location is the axon. It is found in the perikaryon. Class-III neuronal intermediate filament protein. My form an independent structural network without the involvement of other neurofilaments or may cooperate with the neuronal intermediate filament proteins NEFL, NEFH, NEFM and INA to form a filamentous network. Assembly of the neuronal intermediate filaments may be regulated by RAB7A. Plays a role in the development of unmyelinated sensory neurons. May be involved in axon elongation and axon regeneration after injury. Inhibits neurite extension in type II spiral ganglion neurons in the cochlea. This Rattus norvegicus (Rat) protein is Peripherin (Prph).